The primary structure comprises 243 residues: ATP synthase subunit a (243 aa).

The next 8 membrane-spanning stretches (helical) occupy residues 28 to 48, 52 to 72, 83 to 103, 114 to 134, 141 to 161, 177 to 197, 200 to 220, and 221 to 241; these read SSLY…AGVF, VIPG…LGII, YFPL…VGML, HIVV…LIGL, FFAM…MIFL, LTAN…FVYP, LLIS…EVFI, and AMLQ…DSLF.

This sequence belongs to the ATPase A chain family. As to quaternary structure, F-type ATPases have 2 components, CF(1) - the catalytic core - and CF(0) - the membrane proton channel. CF(1) has five subunits: alpha(3), beta(3), gamma(1), delta(1), epsilon(1). CF(0) has three main subunits: a(1), b(2) and c(9-12). The alpha and beta chains form an alternating ring which encloses part of the gamma chain. CF(1) is attached to CF(0) by a central stalk formed by the gamma and epsilon chains, while a peripheral stalk is formed by the delta and b chains.

It localises to the cell inner membrane. Functionally, key component of the proton channel; it plays a direct role in the translocation of protons across the membrane. This Neorickettsia sennetsu (strain ATCC VR-367 / Miyayama) (Ehrlichia sennetsu) protein is ATP synthase subunit a.